Here is a 164-residue protein sequence, read N- to C-terminus: MKTAVYPGSFDPITKGHLNIIKRASKVCDKLIVAVLVNPEKKGLFSVDERVEMIKRVTKKHSNVEVQCFSGLLIDFMKEKKSKVIIKGLRTMSDFEYEFKMALMNNKLDPNIETVFMMTNAKYSYLSSSSVKQVAMFGGCIKDLVPDEIIPDIKKKINHKKECI.

Position 9 (serine 9) interacts with substrate. ATP-binding positions include 9-10 and histidine 17; that span reads SF. Residues lysine 41, leucine 73, and lysine 87 each coordinate substrate. ATP-binding positions include 88–90, glutamate 98, and 123–129; these read GLR and YSYLSSS.

It belongs to the bacterial CoaD family. In terms of assembly, homohexamer. The cofactor is Mg(2+).

It localises to the cytoplasm. It catalyses the reaction (R)-4'-phosphopantetheine + ATP + H(+) = 3'-dephospho-CoA + diphosphate. It functions in the pathway cofactor biosynthesis; coenzyme A biosynthesis; CoA from (R)-pantothenate: step 4/5. Reversibly transfers an adenylyl group from ATP to 4'-phosphopantetheine, yielding dephospho-CoA (dPCoA) and pyrophosphate. This is Phosphopantetheine adenylyltransferase from Clostridium botulinum (strain ATCC 19397 / Type A).